Consider the following 35-residue polypeptide: Photosystem II reaction center protein Psb30 (35 aa).

A helical transmembrane segment spans residues 7–27 (LIANFGALALITLAGPAVIFI).

Belongs to the Psb30/Ycf12 family. As to quaternary structure, PSII is composed of 1 copy each of membrane proteins PsbA, PsbB, PsbC, PsbD, PsbE, PsbF, PsbH, PsbI, PsbJ, PsbK, PsbL, PsbM, PsbT, PsbX, PsbY, PsbZ, Psb30/Ycf12, peripheral proteins PsbO, CyanoQ (PsbQ), PsbU, PsbV and a large number of cofactors. It forms dimeric complexes.

Its subcellular location is the cellular thylakoid membrane. A core subunit of photosystem II (PSII), probably helps stabilize the reaction center. In Synechococcus sp. (strain CC9311), this protein is Photosystem II reaction center protein Psb30.